The primary structure comprises 247 residues: Carboxy-S-adenosyl-L-methionine synthase (247 aa).

S-adenosyl-L-methionine contacts are provided by residues Y39, 64–66, 89–90, 117–118, N132, and R199; these read GCS, DN, and DI.

This sequence belongs to the class I-like SAM-binding methyltransferase superfamily. Cx-SAM synthase family. As to quaternary structure, homodimer.

It catalyses the reaction prephenate + S-adenosyl-L-methionine = carboxy-S-adenosyl-L-methionine + 3-phenylpyruvate + H2O. Its function is as follows. Catalyzes the conversion of S-adenosyl-L-methionine (SAM) to carboxy-S-adenosyl-L-methionine (Cx-SAM). The chain is Carboxy-S-adenosyl-L-methionine synthase from Escherichia coli (strain K12 / MC4100 / BW2952).